A 272-amino-acid chain; its full sequence is Putative B3 domain-containing protein Os02g0455900 (272 aa).

Residues 30 to 134 (GKVLMPSDVS…RFFICCRCTC (105 aa)) constitute a DNA-binding region (TF-B3). Residues 189-227 (TASLGCAAAQPPQVPPTPTPRRRRRSMMVHPEPPEHTTD) are disordered.

Its subcellular location is the nucleus. The sequence is that of Putative B3 domain-containing protein Os02g0455900 from Oryza sativa subsp. japonica (Rice).